The following is a 226-amino-acid chain: UPF0173 metal-dependent hydrolase GTNG_2675 (226 aa).

This sequence belongs to the UPF0173 family.

The sequence is that of UPF0173 metal-dependent hydrolase GTNG_2675 from Geobacillus thermodenitrificans (strain NG80-2).